Reading from the N-terminus, the 673-residue chain is G-protein-signaling modulator 1 (673 aa).

The segment at M1 to R507 is mediates association with membranes. 9 TPR repeats span residues C28 to D61, S66 to I99, A106 to Q139, A146 to V178, E180 to L199, G206 to F239, R246 to I279, A286 to L319, and G326 to I359. An interaction with STK11/LKB1 region spans residues D361–I485. At S410 the chain carries Phosphoserine. R418 carries the post-translational modification Omega-N-methylarginine. Residues P420–S439 are compositionally biased toward basic and acidic residues. The interval P420 to R477 is disordered. Residues S442, S467, S469, S490, and S491 each carry the phosphoserine modification. The segment covering K451–S467 has biased composition (basic and acidic residues). Residues E493–L515 form the GoLoco 1 domain. The segment at D510–P544 is disordered. A compositionally biased stretch (low complexity) spans E516–T530. 2 positions are modified to phosphoserine: S543 and S567. 3 GoLoco domains span residues T546 to V568, G594 to P616, and D628 to L650. Disordered stretches follow at residues I609 to D628 and E645 to S673. Phosphoserine is present on S653.

Belongs to the GPSM family. As to quaternary structure, interacts with INSC/inscuteable and FRMPD1. Interacts with GNAI1, GNAI2 and GNAI3 preferentially in their GDP-bound state. May also interact with GNAO1. Interacts with STK11/LKB1 and MACF1. In terms of processing, phosphorylation regulates interaction with G(i/o) alpha. In terms of tissue distribution, isoform 4 is specifically expressed in brain by neurons and also detected in testis, liver, kidney, heart and pancreas (at protein level). Highly expressed in cerebellum and subventricular zone-olfactory bulb system. Isoform 2 and isoform 3 are specifically expressed in heart and are also detected in brain.

Its subcellular location is the endoplasmic reticulum membrane. It localises to the golgi apparatus membrane. The protein localises to the cell membrane. It is found in the cytoplasm. The protein resides in the cytosol. Functionally, guanine nucleotide dissociation inhibitor (GDI) which functions as a receptor-independent activator of heterotrimeric G-protein signaling. Keeps G(i/o) alpha subunit in its GDP-bound form thus uncoupling heterotrimeric G-proteins signaling from G protein-coupled receptors. Controls spindle orientation and asymmetric cell fate of cerebral cortical progenitors. May also be involved in macroautophagy in intestinal cells. May play a role in drug addiction. The protein is G-protein-signaling modulator 1 (Gpsm1) of Rattus norvegicus (Rat).